A 447-amino-acid polypeptide reads, in one-letter code: Phosphoglucosamine mutase (447 aa).

The active-site Phosphoserine intermediate is the Ser105. Ser105, Asp244, Asp246, and Asp248 together coordinate Mg(2+). Ser105 carries the phosphoserine modification.

This sequence belongs to the phosphohexose mutase family. The cofactor is Mg(2+). Post-translationally, activated by phosphorylation.

The enzyme catalyses alpha-D-glucosamine 1-phosphate = D-glucosamine 6-phosphate. In terms of biological role, catalyzes the conversion of glucosamine-6-phosphate to glucosamine-1-phosphate. The protein is Phosphoglucosamine mutase of Polynucleobacter asymbioticus (strain DSM 18221 / CIP 109841 / QLW-P1DMWA-1) (Polynucleobacter necessarius subsp. asymbioticus).